A 375-amino-acid polypeptide reads, in one-letter code: Carbamoyl phosphate synthase small chain (375 aa).

Residues 1-184 (MVSLYLENGL…LDYKPFDEKT (184 aa)) are CPSase. L-glutamine-binding residues include Ser-44, Gly-240, and Gly-242. The Glutamine amidotransferase type-1 domain maps to 188 to 375 (IIAVLDFGAK…KEFVELLKDF (188 aa)). The active-site Nucleophile is Cys-268. Residues Leu-269, Gln-272, Asn-310, and Tyr-313 each coordinate L-glutamine. Catalysis depends on residues His-351 and Glu-353.

This sequence belongs to the CarA family. As to quaternary structure, composed of two chains; the small (or glutamine) chain promotes the hydrolysis of glutamine to ammonia, which is used by the large (or ammonia) chain to synthesize carbamoyl phosphate. Tetramer of heterodimers (alpha,beta)4.

It carries out the reaction hydrogencarbonate + L-glutamine + 2 ATP + H2O = carbamoyl phosphate + L-glutamate + 2 ADP + phosphate + 2 H(+). It catalyses the reaction L-glutamine + H2O = L-glutamate + NH4(+). The protein operates within amino-acid biosynthesis; L-arginine biosynthesis; carbamoyl phosphate from bicarbonate: step 1/1. Its pathway is pyrimidine metabolism; UMP biosynthesis via de novo pathway; (S)-dihydroorotate from bicarbonate: step 1/3. Functionally, small subunit of the glutamine-dependent carbamoyl phosphate synthetase (CPSase). CPSase catalyzes the formation of carbamoyl phosphate from the ammonia moiety of glutamine, carbonate, and phosphate donated by ATP, constituting the first step of 2 biosynthetic pathways, one leading to arginine and/or urea and the other to pyrimidine nucleotides. The small subunit (glutamine amidotransferase) binds and cleaves glutamine to supply the large subunit with the substrate ammonia. This is Carbamoyl phosphate synthase small chain from Helicobacter pylori (strain ATCC 700392 / 26695) (Campylobacter pylori).